The primary structure comprises 109 residues: Protein phosphatase 1 regulatory subunit 1C (109 aa).

The disordered stretch occupies residues 25–109 (AEQIRKRRPT…TNEREEQRDH (85 aa)). The span at 45–54 (NPPEIDDKRV) shows a compositional bias: basic and acidic residues. The segment covering 55-75 (PNTQGELQNASPKQRKQSVYT) has biased composition (polar residues). The segment covering 100–109 (TNEREEQRDH) has biased composition (basic and acidic residues).

It belongs to the protein phosphatase inhibitor 1 family.

The protein localises to the cytoplasm. May increase cell susceptibility to TNF-induced apoptosis. The protein is Protein phosphatase 1 regulatory subunit 1C (PPP1R1C) of Pongo abelii (Sumatran orangutan).